A 240-amino-acid chain; its full sequence is MKRPSGRAADQLRSIRITRNYTKHAEGSVLVEFGDTKVICTVSVENGVPRFLKGQGQGWLTAEYGMLPRATGERNQREASRGKQGGRTLEIQRLIGRSLRAALDMSKLGDVTLYVDCDVIQADGGTRTASITGAMVALVDALKVIKKRGGLKGGDPLKQMIAAVSVGMYQGEPVLDLDYLEDSAAETDLNVVMTSTGGFIEVQGTAEGAPFQPAELNAMLALAQQGMNEIFQLQQAALAD.

Phosphate contacts are provided by residues arginine 87 and 125 to 127 (GTR).

This sequence belongs to the RNase PH family. As to quaternary structure, homohexameric ring arranged as a trimer of dimers.

It catalyses the reaction tRNA(n+1) + phosphate = tRNA(n) + a ribonucleoside 5'-diphosphate. Functionally, phosphorolytic 3'-5' exoribonuclease that plays an important role in tRNA 3'-end maturation. Removes nucleotide residues following the 3'-CCA terminus of tRNAs; can also add nucleotides to the ends of RNA molecules by using nucleoside diphosphates as substrates, but this may not be physiologically important. Probably plays a role in initiation of 16S rRNA degradation (leading to ribosome degradation) during starvation. This is Ribonuclease PH from Pseudomonas fluorescens (strain ATCC BAA-477 / NRRL B-23932 / Pf-5).